The chain runs to 450 residues: Ribosomal protein uS12 methylthiotransferase RimO (450 aa).

The MTTase N-terminal domain occupies 7-123; that stretch reads QKVSMVSLGC…IAEILAEKSG (117 aa). Positions 16, 52, 86, 161, 165, and 168 each coordinate [4Fe-4S] cluster. The region spanning 147 to 377 is the Radical SAM core domain; that stretch reads SSPAWFSYLK…MRIQARLSFK (231 aa). The TRAM domain occupies 380-448; that stretch reads RELIGTTEQV…DYDLIGEIQE (69 aa).

This sequence belongs to the methylthiotransferase family. RimO subfamily. [4Fe-4S] cluster serves as cofactor.

It localises to the cytoplasm. It carries out the reaction L-aspartate(89)-[ribosomal protein uS12]-hydrogen + (sulfur carrier)-SH + AH2 + 2 S-adenosyl-L-methionine = 3-methylsulfanyl-L-aspartate(89)-[ribosomal protein uS12]-hydrogen + (sulfur carrier)-H + 5'-deoxyadenosine + L-methionine + A + S-adenosyl-L-homocysteine + 2 H(+). In terms of biological role, catalyzes the methylthiolation of an aspartic acid residue of ribosomal protein uS12. The protein is Ribosomal protein uS12 methylthiotransferase RimO of Pelobacter propionicus (strain DSM 2379 / NBRC 103807 / OttBd1).